Reading from the N-terminus, the 74-residue chain is ATP synthase subunit 9, mitochondrial (74 aa).

The next 2 membrane-spanning stretches (helical) occupy residues 8–28 (MGAGAATIALAGAAIGIGNVF) and 50–70 (ILGFALTEAIALFALMMAFLI).

The protein belongs to the ATPase C chain family. In terms of assembly, F-type ATPases have 2 components, CF(1) - the catalytic core - and CF(0) - the membrane proton channel. CF(1) has five subunits: alpha(3), beta(3), gamma(1), delta(1), epsilon(1). CF(0) has three main subunits: a, b and c.

The protein localises to the mitochondrion membrane. Functionally, this protein is one of the chains of the nonenzymatic membrane component (F0) of mitochondrial ATPase. This is ATP synthase subunit 9, mitochondrial (ATP9) from Solanum lycopersicum (Tomato).